Consider the following 319-residue polypeptide: Annexin A5 (319 aa).

N-acetylalanine is present on alanine 2. 4 Annexin repeats span residues 13–84 (FDGR…ALMK), 85–156 (PSRL…VLLQ), 168–240 (AQVE…AVVK), and 244–315 (SIPA…LLCG). Lysine 27 is covalently cross-linked (Glycyl lysine isopeptide (Lys-Gly) (interchain with G-Cter in SUMO1); alternate). Residue lysine 27 forms a Glycyl lysine isopeptide (Lys-Gly) (interchain with G-Cter in SUMO2); alternate linkage. Position 35 is a phosphoserine (serine 35). Residues lysine 68, lysine 74, lysine 77, lysine 95, and lysine 99 each carry the N6-acetyllysine modification. Lysine 288 is modified (N6-succinyllysine). The [IL]-x-C-x-x-[DE] motif signature appears at 312–318 (LLCGGED).

This sequence belongs to the annexin family. In terms of assembly, monomer. Binds ATRX, EIF5B and DNMT1. In terms of processing, S-nitrosylation is induced by interferon-gamma and oxidatively-modified low-densitity lipoprotein (LDL(ox)) possibly implicating the iNOS-S100A8/9 transnitrosylase complex.

Its function is as follows. This protein is an anticoagulant protein that acts as an indirect inhibitor of the thromboplastin-specific complex, which is involved in the blood coagulation cascade. In Rattus norvegicus (Rat), this protein is Annexin A5 (Anxa5).